A 549-amino-acid polypeptide reads, in one-letter code: Probable protein kinase UbiB (549 aa).

The region spanning 123 to 501 is the Protein kinase domain; it reads DFDDVPLASA…QHKAHKSNYL (379 aa). ATP is bound by residues 129 to 137 and Lys152; that span reads LASASIAQV. Asp287 functions as the Proton acceptor in the catalytic mechanism. The next 2 helical transmembrane spans lie at 498-517 and 521-540; these read SNYL…ILFT and TLWA…LLGW.

It belongs to the ABC1 family. UbiB subfamily.

The protein resides in the cell inner membrane. The protein operates within cofactor biosynthesis; ubiquinone biosynthesis [regulation]. Is probably a protein kinase regulator of UbiI activity which is involved in aerobic coenzyme Q (ubiquinone) biosynthesis. In Shewanella denitrificans (strain OS217 / ATCC BAA-1090 / DSM 15013), this protein is Probable protein kinase UbiB.